A 794-amino-acid chain; its full sequence is Elongator complex protein 2 (794 aa).

WD repeat units lie at residues 55–93 (EHTK…TTKS), 98–140 (GHTS…YVCF), 147–188 (DGFC…AGEG), 203–244 (GHED…KEQM), 286–328 (GHEG…IWLE), 337–376 (GNSV…PQLW), 384–423 (GHYG…GANP), 433–472 (IHGY…ENFR), 557–601 (GHGY…QIQK), 604–643 (GHQL…VSYQ), 654–693 (VHTR…KESS), 705–751 (LKNE…WKLL), and 759–794 (AHHL…IKLT).

This sequence belongs to the WD repeat ELP2 family. In terms of assembly, component of the elongator complex composed of Elp1, Elp2, Elp3, Elp4, Elp5 and Elp6. The elongator complex associates with and stabilizes microtubules; efficient interaction requires the full complex.

The protein resides in the cytoplasm. It is found in the nucleus. Its subcellular location is the cytoskeleton. The protein localises to the spindle. It participates in tRNA modification; 5-methoxycarbonylmethyl-2-thiouridine-tRNA biosynthesis. Its function is as follows. Component of the elongator complex, which is required for multiple tRNA modifications, including mcm5U (5-methoxycarbonylmethyl uridine), mcm5s2U (5-methoxycarbonylmethyl-2-thiouridine), and ncm5U (5-carbamoylmethyl uridine). The elongator complex catalyzes the formation of carboxymethyluridine in the wobble base at position 34 in tRNAs. Binding by the elongator complex stabilizes microtubules and promotes their growth. This induces central spindle asymmetry, promoting polarized signaling endosome trafficking during asymmetric cell division and cell fate assignation of sensory organ precursor cells. Involved in the regulation of the STAT pathway. The sequence is that of Elongator complex protein 2 from Drosophila melanogaster (Fruit fly).